A 172-amino-acid chain; its full sequence is Disulfide bond formation protein B (172 aa).

Topologically, residues Met1 to Gln11 are cytoplasmic. Residues Phe12–Tyr28 form a helical membrane-spanning segment. Topologically, residues Val29–Ile46 are periplasmic. Cys38 and Cys41 form a disulfide bridge. Residues Ala47–Pro63 traverse the membrane as a helical segment. Over Arg64 to Lys70 the chain is Cytoplasmic. Residues Ala71–Ala88 traverse the membrane as a helical segment. At Arg89 to Met145 the chain is on the periplasmic side. Cys104 and Cys131 form a disulfide bridge. The chain crosses the membrane as a helical span at residues Trp146 to Lys164. The Cytoplasmic segment spans residues His165–Phe172.

The protein belongs to the DsbB family.

It localises to the cell inner membrane. Functionally, required for disulfide bond formation in some periplasmic proteins. Acts by oxidizing the DsbA protein. This is Disulfide bond formation protein B from Xanthomonas campestris pv. campestris (strain 8004).